The chain runs to 70 residues: uncharacterized protein (70 aa).

This is an uncharacterized protein from Enterobacteria phage T4 (Bacteriophage T4).